Reading from the N-terminus, the 283-residue chain is Pantothenate synthetase (283 aa).

30 to 37 (MGNLHAGH) is an ATP binding site. The active-site Proton donor is His37. Gln61 serves as a coordination point for (R)-pantoate. Residue Gln61 coordinates beta-alanine. 149–152 (GEKD) serves as a coordination point for ATP. Residue Gln155 participates in (R)-pantoate binding. Residues Val178 and 186–189 (LSSR) each bind ATP.

The protein belongs to the pantothenate synthetase family. Homodimer.

The protein localises to the cytoplasm. The enzyme catalyses (R)-pantoate + beta-alanine + ATP = (R)-pantothenate + AMP + diphosphate + H(+). The protein operates within cofactor biosynthesis; (R)-pantothenate biosynthesis; (R)-pantothenate from (R)-pantoate and beta-alanine: step 1/1. Catalyzes the condensation of pantoate with beta-alanine in an ATP-dependent reaction via a pantoyl-adenylate intermediate. The chain is Pantothenate synthetase from Pseudomonas paraeruginosa (strain DSM 24068 / PA7) (Pseudomonas aeruginosa (strain PA7)).